Reading from the N-terminus, the 193-residue chain is dTTP/UTP pyrophosphatase (193 aa).

Residue Asp-77 is the Proton acceptor of the active site.

This sequence belongs to the Maf family. YhdE subfamily. The cofactor is a divalent metal cation.

It is found in the cytoplasm. It carries out the reaction dTTP + H2O = dTMP + diphosphate + H(+). It catalyses the reaction UTP + H2O = UMP + diphosphate + H(+). In terms of biological role, nucleoside triphosphate pyrophosphatase that hydrolyzes dTTP and UTP. May have a dual role in cell division arrest and in preventing the incorporation of modified nucleotides into cellular nucleic acids. This Parabacteroides distasonis (strain ATCC 8503 / DSM 20701 / CIP 104284 / JCM 5825 / NCTC 11152) protein is dTTP/UTP pyrophosphatase.